A 110-amino-acid polypeptide reads, in one-letter code: Thiosulfate sulfurtransferase GlpE (110 aa).

Positions 17–105 (HQGKAVLVDI…WHRHFPAEVE (89 aa)) constitute a Rhodanese domain. The active-site Cysteine persulfide intermediate is Cys65.

The protein belongs to the GlpE family.

It localises to the cytoplasm. The catalysed reaction is thiosulfate + hydrogen cyanide = thiocyanate + sulfite + 2 H(+). It carries out the reaction thiosulfate + [thioredoxin]-dithiol = [thioredoxin]-disulfide + hydrogen sulfide + sulfite + 2 H(+). Transferase that catalyzes the transfer of sulfur from thiosulfate to thiophilic acceptors such as cyanide or dithiols. May function in a CysM-independent thiosulfate assimilation pathway by catalyzing the conversion of thiosulfate to sulfite, which can then be used for L-cysteine biosynthesis. The sequence is that of Thiosulfate sulfurtransferase GlpE from Enterobacter sp. (strain 638).